A 388-amino-acid chain; its full sequence is LIM/homeobox protein Lhx9 (388 aa).

LIM zinc-binding domains lie at 69–130 and 131–193; these read ISDR…CHLG and ISAS…LSYT. Disordered regions lie at residues 239 to 263, 321 to 356, and 369 to 388; these read ENEADHLDRDQQPYPPSQKTKRMRT, ENGGVDKADGTSLPAPPSADSGALTPPGTATTLTDL, and SNMDSHESGSPSQTTLTNLF. Residues 267-326 constitute a DNA-binding region (homeobox); the sequence is HHQLRTMKSYFAINHNPDAKDLKQLAQKTGLTKRVLQVWFQNARAKFRRNLLRQENGGVD. Low complexity predominate over residues 344-356; that stretch reads LTPPGTATTLTDL. Positions 376–388 are enriched in polar residues; it reads SGSPSQTTLTNLF.

Interacts with LDB1 and LDB2.

The protein resides in the nucleus. Functionally, involved in gonadal development. The chain is LIM/homeobox protein Lhx9 (Lhx9) from Rattus norvegicus (Rat).